We begin with the raw amino-acid sequence, 732 residues long: Catalase-peroxidase (732 aa).

Residues 1–45 form the signal peptide; it reads MDTKVDNAGKCPVVHTHTAHGGRSNRDWWPNQLNLRILHQNSSLS. Positions 97–220 form a cross-link, tryptophyl-tyrosyl-methioninium (Trp-Tyr) (with M-246); sequence WHSAGTYRTG…LSAVQMGLIY (124 aa). Histidine 98 serves as the catalytic Proton acceptor. Residues 220 to 246 constitute a cross-link (tryptophyl-tyrosyl-methioninium (Tyr-Met) (with W-97)); that stretch reads YVNPEGPNGNPDPLAAARDIRETFARM. Histidine 261 contacts heme b.

This sequence belongs to the peroxidase family. Peroxidase/catalase subfamily. As to quaternary structure, homodimer or homotetramer. Heme b serves as cofactor. In terms of processing, formation of the three residue Trp-Tyr-Met cross-link is important for the catalase, but not the peroxidase activity of the enzyme.

The catalysed reaction is H2O2 + AH2 = A + 2 H2O. It catalyses the reaction 2 H2O2 = O2 + 2 H2O. Bifunctional enzyme with both catalase and broad-spectrum peroxidase activity. The polypeptide is Catalase-peroxidase (Rhizobium rhizogenes (strain K84 / ATCC BAA-868) (Agrobacterium radiobacter)).